The chain runs to 338 residues: Protein WVD2-like 2 (338 aa).

Positions 1 to 14 (MGRELVDKHMDKKA) are enriched in basic and acidic residues. The tract at residues 1 to 150 (MGRELVDKHM…SFSVASSSAT (150 aa)) is disordered. 2 stretches are compositionally biased toward polar residues: residues 15–37 (NSLTASSTGSSDDNKVPSPSTNE) and 59–69 (QGITETPGSHK). Over residues 100-115 (NNSLGNGASHNSSSAS) the composition is skewed to low complexity. Over residues 128–138 (RIPDHKMHHDE) the composition is skewed to basic and acidic residues. Residues 177 to 214 (REFYQKLEEKQKALEAEKRENEKRLKEEQEAVTKQLRK) adopt a coiled-coil conformation. The segment at 222 to 338 (PVPSFYQEGP…GENGVGVVEE (117 aa)) is disordered. Polar residues predominate over residues 288–300 (TNSVPRTPNSSSK).

This sequence belongs to the TPX2 family. As to expression, expressed in seedlings.

It is found in the cytoplasm. Its subcellular location is the cytoskeleton. Microtubule-associated protein (MAP) that regulates the orientation of interphase cortical microtubules. This is Protein WVD2-like 2 from Arabidopsis thaliana (Mouse-ear cress).